Reading from the N-terminus, the 596-residue chain is Aspartate--tRNA(Asp/Asn) ligase (596 aa).

Glu-175 contributes to the L-aspartate binding site. Residues 199 to 202 form an aspartate region; the sequence is QQYK. L-aspartate is bound by residues Arg-221 and His-454. Residue 221 to 223 participates in ATP binding; sequence RDE. Glu-488 contacts ATP. Residue Arg-495 coordinates L-aspartate. Residue 540–543 coordinates ATP; it reads GIDR.

The protein belongs to the class-II aminoacyl-tRNA synthetase family. Type 1 subfamily. As to quaternary structure, homodimer.

Its subcellular location is the cytoplasm. It catalyses the reaction tRNA(Asx) + L-aspartate + ATP = L-aspartyl-tRNA(Asx) + AMP + diphosphate. In terms of biological role, aspartyl-tRNA synthetase with relaxed tRNA specificity since it is able to aspartylate not only its cognate tRNA(Asp) but also tRNA(Asn). Reaction proceeds in two steps: L-aspartate is first activated by ATP to form Asp-AMP and then transferred to the acceptor end of tRNA(Asp/Asn). This is Aspartate--tRNA(Asp/Asn) ligase from Rhizobium leguminosarum bv. trifolii (strain WSM2304).